The sequence spans 407 residues: Pyridinium-3,5-bisthiocarboxylic acid mononucleotide nickel insertion protein (407 aa).

It belongs to the LarC family.

The enzyme catalyses Ni(II)-pyridinium-3,5-bisthiocarboxylate mononucleotide = pyridinium-3,5-bisthiocarboxylate mononucleotide + Ni(2+). Functionally, involved in the biosynthesis of a nickel-pincer cofactor ((SCS)Ni(II) pincer complex). Binds Ni(2+), and functions in nickel delivery to pyridinium-3,5-bisthiocarboxylic acid mononucleotide (P2TMN), to form the mature cofactor. Is thus probably required for the activation of nickel-pincer cofactor-dependent enzymes. The chain is Pyridinium-3,5-bisthiocarboxylic acid mononucleotide nickel insertion protein from Acetivibrio thermocellus (strain ATCC 27405 / DSM 1237 / JCM 9322 / NBRC 103400 / NCIMB 10682 / NRRL B-4536 / VPI 7372) (Clostridium thermocellum).